We begin with the raw amino-acid sequence, 231 residues long: Probable septum site-determining protein MinC (231 aa).

The disordered stretch occupies residues 102-125; it reads KEKAPRPAPAPQAPTQNTTPVTKT. A compositionally biased stretch (low complexity) spans 114-123; it reads APTQNTTPVT.

Belongs to the MinC family. In terms of assembly, interacts with MinD and FtsZ.

Cell division inhibitor that blocks the formation of polar Z ring septums. Rapidly oscillates between the poles of the cell to destabilize FtsZ filaments that have formed before they mature into polar Z rings. Prevents FtsZ polymerization. This is Probable septum site-determining protein MinC from Escherichia coli O45:K1 (strain S88 / ExPEC).